Consider the following 166-residue polypeptide: NADH-quinone oxidoreductase subunit I (166 aa).

4Fe-4S ferredoxin-type domains are found at residues 57-87 and 97-126; these read LRRY…IESE and TRYD…VTPI. 8 residues coordinate [4Fe-4S] cluster: cysteine 67, cysteine 70, cysteine 73, cysteine 77, cysteine 106, cysteine 109, cysteine 112, and cysteine 116.

The protein belongs to the complex I 23 kDa subunit family. As to quaternary structure, NDH-1 is composed of 14 different subunits. Subunits NuoA, H, J, K, L, M, N constitute the membrane sector of the complex. [4Fe-4S] cluster serves as cofactor.

The protein localises to the cell inner membrane. The catalysed reaction is a quinone + NADH + 5 H(+)(in) = a quinol + NAD(+) + 4 H(+)(out). Its function is as follows. NDH-1 shuttles electrons from NADH, via FMN and iron-sulfur (Fe-S) centers, to quinones in the respiratory chain. The immediate electron acceptor for the enzyme in this species is believed to be ubiquinone. Couples the redox reaction to proton translocation (for every two electrons transferred, four hydrogen ions are translocated across the cytoplasmic membrane), and thus conserves the redox energy in a proton gradient. In Legionella pneumophila (strain Lens), this protein is NADH-quinone oxidoreductase subunit I.